An 864-amino-acid polypeptide reads, in one-letter code: Translation initiation factor IF-2 (864 aa).

Over residues 140-171 the composition is skewed to basic and acidic residues; it reads DSRSLNTKKENKLKISNKDEQNKKFNQHRESN. The interval 140-179 is disordered; it reads DSRSLNTKKENKLKISNKDEQNKKFNQHRESNSFDLNHKK. One can recognise a tr-type G domain in the interval 364-533; it reads IRAPVVTIMG…LLQAEMLELK (170 aa). Positions 373–380 are G1; it reads GHVDHGKT. Residue 373 to 380 participates in GTP binding; the sequence is GHVDHGKT. A G2 region spans residues 398 to 402; the sequence is GITQN. The tract at residues 419–422 is G3; the sequence is DTPG. GTP-binding positions include 419-423 and 473-476; these read DTPGH and NKID. The segment at 473–476 is G4; the sequence is NKID. The segment at 509–511 is G5; sequence SAK.

Belongs to the TRAFAC class translation factor GTPase superfamily. Classic translation factor GTPase family. IF-2 subfamily.

It is found in the cytoplasm. Its function is as follows. One of the essential components for the initiation of protein synthesis. Protects formylmethionyl-tRNA from spontaneous hydrolysis and promotes its binding to the 30S ribosomal subunits. Also involved in the hydrolysis of GTP during the formation of the 70S ribosomal complex. The chain is Translation initiation factor IF-2 from Buchnera aphidicola subsp. Acyrthosiphon pisum (strain Tuc7).